The chain runs to 205 residues: MIGKLKGSIEEIGADYVLVDVHGVCYVAYCSARTLSKIGSVGEAVVLFIETYVREDQLKLFGFVSALEREWFNLLQSVQGVGSKVALAVLSTLSPSELANAIALQDKTMISRAPGIGPKVAVRLVTELRNKAPAFAGDASASIGLKQELGEGVASAPVADAVSALTNLGYSRDQAANAVAAALKNGGEGGDSAKLIRLGLKELSR.

The tract at residues methionine 1–valine 64 is domain I. The tract at residues serine 65 to isoleucine 143 is domain II. Residues glycine 144–valine 153 are flexible linker. A domain III region spans residues valine 153–arginine 205.

This sequence belongs to the RuvA family. In terms of assembly, homotetramer. Forms an RuvA(8)-RuvB(12)-Holliday junction (HJ) complex. HJ DNA is sandwiched between 2 RuvA tetramers; dsDNA enters through RuvA and exits via RuvB. An RuvB hexamer assembles on each DNA strand where it exits the tetramer. Each RuvB hexamer is contacted by two RuvA subunits (via domain III) on 2 adjacent RuvB subunits; this complex drives branch migration. In the full resolvosome a probable DNA-RuvA(4)-RuvB(12)-RuvC(2) complex forms which resolves the HJ.

The protein resides in the cytoplasm. Functionally, the RuvA-RuvB-RuvC complex processes Holliday junction (HJ) DNA during genetic recombination and DNA repair, while the RuvA-RuvB complex plays an important role in the rescue of blocked DNA replication forks via replication fork reversal (RFR). RuvA specifically binds to HJ cruciform DNA, conferring on it an open structure. The RuvB hexamer acts as an ATP-dependent pump, pulling dsDNA into and through the RuvAB complex. HJ branch migration allows RuvC to scan DNA until it finds its consensus sequence, where it cleaves and resolves the cruciform DNA. The sequence is that of Holliday junction branch migration complex subunit RuvA from Agrobacterium fabrum (strain C58 / ATCC 33970) (Agrobacterium tumefaciens (strain C58)).